A 313-amino-acid chain; its full sequence is MPTEFLYTSKIAAISWAATGGRQQRVYFQDLNGKIREAQRGGDNPWTGGSSQNVIGEAKLFSPLAAVTWKSAQGIQIRVYCVNKDNILSEFVYDGSKWITGQLGSVGVKVGSNSKLAALQWGGSESAPPNIRVYYQKSNGSGSSIHEYVWSGKWTAGASFGSTVPGTGIGATAIGPGRLRIYYQATDNKIREHCWDSNSWYVGGFSASASAGVSIAAISWGSTPNIRVYWQKGREELYEAAYGGSWNTPGQIKDASRPTPSLPDTFIAANSSGNIDISVFFQASGVSLQQWQWISGKGWSIGAVVPTGTPAGW.

6 consecutive repeat copies span residues 5–57 (FLYT…VIGE), 58–109 (AKLF…VGVK), 110–162 (VGSN…SFGS), 163–208 (TVPG…FSAS), 209–260 (ASAG…RPTP), and 261–304 (SLPD…IGAV). Positions 5–304 (FLYTSKIAAI…SGKGWSIGAV (300 aa)) are 6 X approximate tandem repeats. Arg-25, Glu-37, Arg-78, Glu-90, Trp-98, Gln-102, Arg-132, Glu-147, and Trp-154 together coordinate beta-L-fucose. Residues Arg-78 and Glu-90 each contribute to the alpha-L-fucose site. Gln-102 provides a ligand contact to alpha-L-fucose. Trp-154, Arg-180, and Glu-192 together coordinate alpha-L-fucose. Residue Trp-200 coordinates beta-L-fucose. Residue Gly-204 participates in alpha-L-fucose binding. Residues Arg-227 and Glu-239 each contribute to the beta-L-fucose site. Trp-246 lines the alpha-L-fucose pocket. A beta-L-fucose-binding site is contributed by Trp-299.

This sequence belongs to the fungal fucose-specific lectin family. In terms of assembly, forms homodimers. The two AAL monomers are associated via interactions between N-terminal and C-terminal peptides. Tyr-7 interacts via aromatic ring stacking with its counterpart on the other monomer, whereas Ser-284 interacts via hydrogen bonding with Asp-264 on the other monomer.

Its function is as follows. Lectin that specifically binds to L-fucose. Has strongest preference for the alpha-1,6-fucosylated chain (core fucose) on glycoproteins among alpha-1,2-, alpha-1,3-, alpha-1,4-, and alpha-1,6-fucosylated chains. Might play a role in the differentiation of the fruiting body. Exhibits antifungal activity against Mucor racemosus and thus could act as an antifungal protein in natural ecosystems. The chain is Fucose-specific lectin from Aleuria aurantia (Orange peel mushroom).